The following is a 93-amino-acid chain: Small ribosomal subunit protein uS19 (93 aa).

The protein belongs to the universal ribosomal protein uS19 family.

Protein S19 forms a complex with S13 that binds strongly to the 16S ribosomal RNA. This is Small ribosomal subunit protein uS19 from Geobacter sulfurreducens (strain ATCC 51573 / DSM 12127 / PCA).